We begin with the raw amino-acid sequence, 154 residues long: Isotocin-neurophysin IT 1 (154 aa).

Residues Met-1–Ala-20 form the signal peptide. Cys-21 and Cys-26 are joined by a disulfide. At Gly-29 the chain carries Glycine amide. Disulfide bonds link Cys-42/Cys-86, Cys-45/Cys-59, Cys-53/Cys-76, Cys-60/Cys-66, Cys-93/Cys-105, Cys-99/Cys-117, and Cys-106/Cys-111.

It belongs to the vasopressin/oxytocin family.

In terms of biological role, isotocin causes contraction of smooth muscles. The sequence is that of Isotocin-neurophysin IT 1 from Catostomus commersonii (White sucker).